A 715-amino-acid chain; its full sequence is ATP-dependent DNA helicase Hel308 (715 aa).

The Q motif signature appears at 8–36 (MPIEDLKLPSNVIEIIKKRGIKKLNPPQT). ATP contacts are provided by residues Q35 and 53 to 60 (SPTGSGKT). In terms of domain architecture, Helicase ATP-binding spans 40-203 (KKGLLEGNRL…WLGAEPVATN (164 aa)). The DEAH box motif lies at 152–155 (DELH). The region spanning 236-442 (HGDDAIIAYT…ERAFYTFLLG (207 aa)) is the Helicase C-terminal domain.

This sequence belongs to the helicase family. Hel308 subfamily. Monomer.

It catalyses the reaction Couples ATP hydrolysis with the unwinding of duplex DNA by translocating in the 3'-5' direction.. It carries out the reaction ATP + H2O = ADP + phosphate + H(+). Functionally, DNA-dependent ATPase and 3'-5' DNA helicase that may be involved in repair of stalled replication forks. A low processivity 3'-5' helicase. Unwinds short dsDNA substrates with 3'-overhangs (25 bp dsDNA with 25 base overhang), less active on longer dsDNA substrates. Also unwinds the lagging strand of a stalled replication fork (but the leading strand was not tested). Binds ssDNA, but dsDNA about 35-fold less well. Able to displace streptavidin from biotinylated ssDNA, which is partially inhibited by DNA-binding proteins, suggesting it may play a role in stripping proteins from stalled replication forks. In Saccharolobus solfataricus (strain 98/2) (Sulfolobus solfataricus), this protein is ATP-dependent DNA helicase Hel308.